A 65-amino-acid polypeptide reads, in one-letter code: UPF0434 protein IL1511 (65 aa).

The protein belongs to the UPF0434 family.

This is UPF0434 protein IL1511 from Idiomarina loihiensis (strain ATCC BAA-735 / DSM 15497 / L2-TR).